A 741-amino-acid polypeptide reads, in one-letter code: Penicillin-binding protein 1B (741 aa).

The Cytoplasmic portion of the chain corresponds to 1 to 12 (MYPVNLKLSIKF). A helical; Signal-anchor for type II membrane protein transmembrane segment spans residues 13–33 (LFYFFLYFLLIIIIYGVYLYF). Topologically, residues 34–741 (KINQVIHGKI…WIRNHNIFCT (708 aa)) are extracellular. The segment at 139-311 (LRLDPQLIAM…SLYNPWNNPV (173 aa)) is transglycosylase. The Proton donor; for transglycosylase activity role is filled by glutamate 177. A transpeptidase region spans residues 395 to 687 (ENAIRHGIQQ…STGAMKIYHN (293 aa)). Serine 454 acts as the Acyl-ester intermediate; for transpeptidase activity in catalysis.

In the N-terminal section; belongs to the glycosyltransferase 51 family. This sequence in the C-terminal section; belongs to the transpeptidase family.

The protein resides in the cell membrane. The catalysed reaction is [GlcNAc-(1-&gt;4)-Mur2Ac(oyl-L-Ala-gamma-D-Glu-L-Lys-D-Ala-D-Ala)](n)-di-trans,octa-cis-undecaprenyl diphosphate + beta-D-GlcNAc-(1-&gt;4)-Mur2Ac(oyl-L-Ala-gamma-D-Glu-L-Lys-D-Ala-D-Ala)-di-trans,octa-cis-undecaprenyl diphosphate = [GlcNAc-(1-&gt;4)-Mur2Ac(oyl-L-Ala-gamma-D-Glu-L-Lys-D-Ala-D-Ala)](n+1)-di-trans,octa-cis-undecaprenyl diphosphate + di-trans,octa-cis-undecaprenyl diphosphate + H(+). It catalyses the reaction Preferential cleavage: (Ac)2-L-Lys-D-Ala-|-D-Ala. Also transpeptidation of peptidyl-alanyl moieties that are N-acyl substituents of D-alanine.. It participates in cell wall biogenesis; peptidoglycan biosynthesis. Functionally, cell wall formation. Synthesis of cross-linked peptidoglycan from the lipid intermediates. The enzyme has a penicillin-insensitive transglycosylase N-terminal domain (formation of linear glycan strands) and a penicillin-sensitive transpeptidase C-terminal domain (cross-linking of the peptide subunits). The chain is Penicillin-binding protein 1B (mrcB) from Buchnera aphidicola subsp. Baizongia pistaciae (strain Bp).